A 403-amino-acid chain; its full sequence is Protein IQ-DOMAIN 23 (403 aa).

The tract at residues 1 to 43 (MGFFGRLFGSKKKSDKAASSRDKRRWSFTTRSSNSSKRAPAVT) is disordered. Residues 10-17 (SKKKSDKA) carry the Nuclear localization signal motif. The segment covering 27-43 (SFTTRSSNSSKRAPAVT) has biased composition (polar residues). A calmodulin-binding region spans residues 115 to 133 (QENIAAMKIQSAFRGYLAR). 2 IQ domains span residues 116–144 (ENIA…ALVK) and 145–167 (LQAL…RMQT). 3 disordered regions span residues 176–208 (RARA…RSLH), 242–301 (ILEV…PTSR), and 381–403 (GGDS…SFLV). Residues 257–267 (LRSERNNESPR) show a composition bias toward basic and acidic residues.

It belongs to the IQD family. Binds to multiple calmodulin (CaM) in the presence of Ca(2+) and CaM-like proteins.

The protein localises to the nucleus. Its subcellular location is the nucleolus. It is found in the cytoplasm. The protein resides in the cytoskeleton. It localises to the cell membrane. In terms of biological role, may be involved in cooperative interactions with calmodulins or calmodulin-like proteins. Recruits calmodulin proteins to microtubules, thus being a potential scaffold in cellular signaling and trafficking. May associate with nucleic acids and regulate gene expression at the transcriptional or post-transcriptional level. This is Protein IQ-DOMAIN 23 from Arabidopsis thaliana (Mouse-ear cress).